Reading from the N-terminus, the 1338-residue chain is Aldehyde oxidase 1 (1338 aa).

The 2Fe-2S ferredoxin-type domain maps to 5–92; it reads SELLFYVNGR…GTAVTTVEGI (88 aa). Residues Gln113 and Cys151 each contribute to the Mo-molybdopterin site. The FAD-binding PCMH-type domain occupies 236–421; sequence FGSERMMWFS…VSVNIPYSRK (186 aa). FAD is bound by residues 264-271, Ala345, Ser354, His358, Asp367, and Leu411; that span reads VIMGNTSV. Mo-molybdopterin-binding positions include 806–807 and Met1047; that span reads AF. Phosphoserine is present on Ser1068. Residues 1088 to 1091, Gln1203, and Leu1268 each bind Mo-molybdopterin; that span reads GSVV. Glu1270 acts as the Proton acceptor; for azaheterocycle hydroxylase activity in catalysis.

Belongs to the xanthine dehydrogenase family. As to quaternary structure, homodimer. The cofactor is [2Fe-2S] cluster. Requires FAD as cofactor. Mo-molybdopterin serves as cofactor. In terms of tissue distribution, detected at high levels in liver, also detected in lung, kidney, lacrimal gland and olfactory mucosa.

The protein localises to the cytoplasm. It carries out the reaction an aldehyde + O2 + H2O = a carboxylate + H2O2 + H(+). The enzyme catalyses retinal + O2 + H2O = retinoate + H2O2 + H(+). Functionally, oxidase with broad substrate specificity, oxidizing aromatic azaheterocycles, such as N1-methylnicotinamide, N-methylphthalazinium and phthalazine, as well as aldehydes, such as benzaldehyde, retinal, pyridoxal, and vanillin. Plays a key role in the metabolism of xenobiotics and drugs containing aromatic azaheterocyclic substituents. Participates in the bioactivation of prodrugs such as famciclovir, catalyzing the oxidation step from 6-deoxypenciclovir to penciclovir, which is a potent antiviral agent. Is probably involved in the regulation of reactive oxygen species homeostasis. May be a prominent source of superoxide generation via the one-electron reduction of molecular oxygen. May also catalyze nitric oxide (NO) production via the reduction of nitrite to NO with NADH or aldehyde as electron donor. May play a role in adipogenesis. The chain is Aldehyde oxidase 1 (AOX1) from Macaca fascicularis (Crab-eating macaque).